We begin with the raw amino-acid sequence, 117 residues long: DNA-directed RNA polymerase II subunit RPB11 (117 aa).

An N-acetylmethionine modification is found at methionine 1.

Belongs to the archaeal Rpo11/eukaryotic RPB11/RPC19 RNA polymerase subunit family. As to quaternary structure, component of the RNA polymerase II (Pol II) core complex consisting of 12 subunits: a ten-subunit catalytic core composed of POLR2A/RPB1, POLR2B/RPB2, POLR2C/RPB3, POLR2I/RPB9, POLR2J/RPB11, POLR2E/RPABC1, POLR2F/RPABC2, POLR2H/RPABC3, POLR2K/RPABC4 and POLR2L/RPABC5 and a mobile stalk composed of two subunits POLR2D/RPB4 and POLR2G/RPB7, protruding from the core and functioning primarily in transcription initiation. Part of Pol II(G) complex, in which Pol II core associates with an additional subunit POLR2M; unlike conventional Pol II, Pol II(G) functions as a transcriptional repressor. Part of TBP-based Pol II pre-initiation complex (PIC), in which Pol II core assembles with general transcription factors and other specific initiation factors including GTF2E1, GTF2E2, GTF2F1, GTF2F2, TCEA1, ERCC2, ERCC3, GTF2H2, GTF2H3, GTF2H4, GTF2H5, GTF2A1, GTF2A2, GTF2B and TBP; this large multi-subunit PIC complex mediates DNA unwinding and targets Pol II core to the transcription start site where the first phosphodiester bond forms. Interacts with AATF. Interacts with PTPN6; this interaction promotes the recruitment of RNA pol II to the PCK1 promoter.

The protein resides in the nucleus. Its function is as follows. Core component of RNA polymerase II (Pol II), a DNA-dependent RNA polymerase which synthesizes mRNA precursors and many functional non-coding RNAs using the four ribonucleoside triphosphates as substrates. The protein is DNA-directed RNA polymerase II subunit RPB11 (Polr2j) of Mus musculus (Mouse).